The chain runs to 500 residues: MSNLPIINFINFNQNGSCISMGTSQGFKIFNCEPFGRFYQDEEGGCGIVEMLFSTSLLAVVGMGDNPAMSPRRLRMLNTKRHSVICEVTFPTTILSVKMNKSRLAVLLQEQIYIYDISNMRLLHTIETSMNAQGIMSMSPNSENNYLVYPSPPKVINSEIKDHATTNNINIKKTDAVDDTIKKDYSLQVPSDITGQQQQQQPGVDPATSNNTANKIIKNGDVIVFNLQTLQPTMVIEAHKGEIAALKLSADGTLLATASEKGTIIRVFNVENGSKVYQFRRGTYPTKISSLSFSKDNQFLAVCSSSKTVHIFKLGKNTVDNKSNELNSDDEIEDDLVPRYGDEDEEDEEIDEEATSINSNHSSKEPVVDAKRSTVGRMIRKSSQRLSRKAARTLGAYFPIKVSSILEPSRHFASLKITTSSNQPIKAIAAIDDPIELSIKEYPDLFEKNASNNGDYQNSDTLTMVPIRVVSSEGFMYKYISDPERGGDCILLEQYSLLSD.

The disordered stretch occupies residues 192 to 212; the sequence is DITGQQQQQQPGVDPATSNNT. WD repeat units lie at residues 238-278 and 283-322; these read AHKG…KVYQ and TYPT…VDNK. The L/FRRG motif motif lies at 279 to 283; that stretch reads FRRGT. A disordered region spans residues 320 to 374; sequence DNKSNELNSDDEIEDDLVPRYGDEDEEDEEIDEEATSINSNHSSKEPVVDAKRST. The segment covering 342-354 has biased composition (acidic residues); it reads DEDEEDEEIDEEA. Positions 362–372 are enriched in basic and acidic residues; the sequence is SSKEPVVDAKR.

Belongs to the WD repeat PROPPIN family. In terms of assembly, component of the PI(3,5)P2 regulatory complex.

Its subcellular location is the preautophagosomal structure membrane. The protein resides in the vacuole membrane. It localises to the endosome membrane. Its function is as follows. The PI(3,5)P2 regulatory complex regulates both the synthesis and turnover of phosphatidylinositol 3,5-bisphosphate (PtdIns(3,5)P2). Necessary for proper vacuole morphology. Plays an important role in osmotically-induced vacuole fragmentation. Required for cytoplasm to vacuole transport (Cvt) vesicle formation, pexophagy and starvation-induced autophagy. Involved in correct ATG9 trafficking to the pre-autophagosomal structure. Might also be involved in premeiotic DNA replication. The sequence is that of Autophagy-related protein 18 (ATG18) from Kluyveromyces lactis (strain ATCC 8585 / CBS 2359 / DSM 70799 / NBRC 1267 / NRRL Y-1140 / WM37) (Yeast).